The sequence spans 513 residues: Xylose import ATP-binding protein XylG (513 aa).

2 ABC transporter domains span residues 5-242 (LEMK…VERE) and 259-505 (LRIE…LRSE). 37–44 (GENGSGKS) is a binding site for ATP.

Belongs to the ABC transporter superfamily. Xylose importer (TC 3.A.1.2.4) family. The complex is composed of two ATP-binding proteins (XylG), two transmembrane proteins (XylH) and a solute-binding protein (XylF).

Its subcellular location is the cell inner membrane. It catalyses the reaction D-xylose(out) + ATP + H2O = D-xylose(in) + ADP + phosphate + H(+). In terms of biological role, part of the ABC transporter complex XylFGH involved in xylose import. Responsible for energy coupling to the transport system. The protein is Xylose import ATP-binding protein XylG of Shigella flexneri.